The sequence spans 160 residues: Transcription elongation factor GreA (160 aa).

A coiled-coil region spans residues 50–70; the sequence is AAREQQSFNEGRIQELEAKLS.

Belongs to the GreA/GreB family.

Functionally, necessary for efficient RNA polymerase transcription elongation past template-encoded arresting sites. The arresting sites in DNA have the property of trapping a certain fraction of elongating RNA polymerases that pass through, resulting in locked ternary complexes. Cleavage of the nascent transcript by cleavage factors such as GreA or GreB allows the resumption of elongation from the new 3'terminus. GreA releases sequences of 2 to 3 nucleotides. The sequence is that of Transcription elongation factor GreA from Legionella pneumophila (strain Corby).